A 438-amino-acid polypeptide reads, in one-letter code: uncharacterized protein (438 aa).

At lysine 273 the chain carries N6-(pyridoxal phosphate)lysine.

The protein belongs to the class-III pyridoxal-phosphate-dependent aminotransferase family. Pyridoxal 5'-phosphate serves as cofactor.

Its subcellular location is the mitochondrion. This is an uncharacterized protein from Schizosaccharomyces pombe (strain 972 / ATCC 24843) (Fission yeast).